The primary structure comprises 263 residues: HTH-type transcriptional repressor NanR (263 aa).

Residues 1-22 (MGLMNAFDSQTEDSSPAIGRNL) form a disordered region. An HTH gntR-type domain is found at 30–98 (KKLSEMVEEE…NGERARVSRP (69 aa)). Positions 58 to 77 (ERELMAFFNVGRPSVREALA) form a DNA-binding region, H-T-H motif.

It belongs to the NanR family.

Functionally, transcriptional repressor that controls expression of the genes required for the catabolism of sialic acids. The polypeptide is HTH-type transcriptional repressor NanR (Shigella sonnei (strain Ss046)).